Consider the following 348-residue polypeptide: AT-hook motif nuclear-localized protein 9 (348 aa).

A disordered region spans residues 18–156 (HRGLSGSGPP…MASVGELMPS (139 aa)). Residues 31–46 (GSPQQQQGLRHLPNQN) are compositionally biased toward polar residues. A compositionally biased stretch (low complexity) spans 47 to 60 (SPFGSGSTGFGSPS). A Bipartite nuclear localization signal motif is present at residues 98–106 (KRKRGRPRK). The segment at residues 98–110 (KRKRGRPRKYGQD) is a DNA-binding region (a.T hook 1). The segment covering 112–131 (SVSLALSSSSVSTITPNNSN) has biased composition (low complexity). The segment at residues 132-144 (KRGRGRPPGSGKK) is a DNA-binding region (a.T hook 2). The PPC domain occupies 157–299 (SSGMSFTPHV…EEEASEVVQE (143 aa)).

The protein resides in the nucleus. Transcription factor that specifically binds AT-rich DNA sequences related to the nuclear matrix attachment regions (MARs). This is AT-hook motif nuclear-localized protein 9 from Arabidopsis thaliana (Mouse-ear cress).